The sequence spans 377 residues: Chaperone protein DnaJ 1 (377 aa).

Positions 4–68 constitute a J domain; that stretch reads DYYQTLGVTR…EIRQRYDQFG (65 aa). The segment at 136–218 adopts a CR-type zinc-finger fold; it reads GGEKEIRIPH…CNGVGRKQET (83 aa). Zn(2+) is bound by residues Cys-149, Cys-152, Cys-166, Cys-169, Cys-192, Cys-195, Cys-206, and Cys-209. CXXCXGXG motif repeat units follow at residues 149–156, 166–173, 192–199, and 206–213; these read CQVCEGTG, CGTCNGAG, CPTCNGSG, and CEACNGVG.

The protein belongs to the DnaJ family. Homodimer. The cofactor is Zn(2+).

The protein resides in the cytoplasm. In terms of biological role, participates actively in the response to hyperosmotic and heat shock by preventing the aggregation of stress-denatured proteins and by disaggregating proteins, also in an autonomous, DnaK-independent fashion. Unfolded proteins bind initially to DnaJ; upon interaction with the DnaJ-bound protein, DnaK hydrolyzes its bound ATP, resulting in the formation of a stable complex. GrpE releases ADP from DnaK; ATP binding to DnaK triggers the release of the substrate protein, thus completing the reaction cycle. Several rounds of ATP-dependent interactions between DnaJ, DnaK and GrpE are required for fully efficient folding. Also involved, together with DnaK and GrpE, in the DNA replication of plasmids through activation of initiation proteins. This is Chaperone protein DnaJ 1 from Synechocystis sp. (strain ATCC 27184 / PCC 6803 / Kazusa).